The sequence spans 152 residues: Proteolipid protein 2 (152 aa).

N-linked (GlcNAc...) asparagine glycosylation is present at asparagine 18. The MARVEL domain maps to 19-137 (FSRTRKGILL…DAYVTFPVRQ (119 aa)). Helical transmembrane passes span 25-45 (GILL…FSAS), 48-68 (GYSS…VVYM), and 85-105 (FFRT…VLVE). The N-linked (GlcNAc...) asparagine glycan is linked to asparagine 108. A helical membrane pass occupies residues 112–132 (IVAGVLGLIATCLFGYDAYVT).

Enriched in colonic mucosa. The expression of A4 follows a gradient along the crypto-villus axis with the most abundant message occurring in the lower half of the crypt.

Its subcellular location is the membrane. In terms of biological role, may play a role in cell differentiation in the intestinal epithelium. This Homo sapiens (Human) protein is Proteolipid protein 2 (PLP2).